The following is a 776-amino-acid chain: Probable exo-1,4-beta-xylosidase bxlB (776 aa).

Positions 1–23 (MVHLSPLLRPLAAFSFFTSLAST) are cleaved as a signal peptide. Residues Asn-65 and Asn-105 are each glycosylated (N-linked (GlcNAc...) asparagine). The active site involves Asp-291. N-linked (GlcNAc...) asparagine glycosylation is found at Asn-343, Asn-410, Asn-421, Asn-462, Asn-623, and Asn-766.

Belongs to the glycosyl hydrolase 3 family.

The protein localises to the secreted. The enzyme catalyses Hydrolysis of (1-&gt;4)-beta-D-xylans, to remove successive D-xylose residues from the non-reducing termini.. The protein operates within glycan degradation; xylan degradation. In terms of biological role, xylan 1,4-beta-xylosidase involved in the hydrolysis of xylan, a major structural heterogeneous polysaccharide found in plant biomass representing the second most abundant polysaccharide in the biosphere, after cellulose. This chain is Probable exo-1,4-beta-xylosidase bxlB (bxlB), found in Aspergillus flavus (strain ATCC 200026 / FGSC A1120 / IAM 13836 / NRRL 3357 / JCM 12722 / SRRC 167).